A 150-amino-acid chain; its full sequence is Small ribosomal subunit protein uS13 (150 aa).

Positions 131 to 150 are disordered; that stretch reads QRTKSTFRRGPTVGVSRRKK.

The protein belongs to the universal ribosomal protein uS13 family. Part of the 30S ribosomal subunit. Forms a loose heterodimer with protein S19. Forms two bridges to the 50S subunit in the 70S ribosome.

Its function is as follows. Located at the top of the head of the 30S subunit, it contacts several helices of the 16S rRNA. In the 70S ribosome it contacts the 23S rRNA (bridge B1a) and protein L5 of the 50S subunit (bridge B1b), connecting the 2 subunits; these bridges are implicated in subunit movement. The sequence is that of Small ribosomal subunit protein uS13 from Methanocaldococcus jannaschii (strain ATCC 43067 / DSM 2661 / JAL-1 / JCM 10045 / NBRC 100440) (Methanococcus jannaschii).